Here is a 606-residue protein sequence, read N- to C-terminus: Pescadillo homolog (606 aa).

Residues 346-447 (LSTSLFSPYT…KILLEGPYGQ (102 aa)) enclose the BRCT domain. The tract at residues 461–497 (YEGAYDPAAGPLGPSGVEQESESEADEVSEEDEEDQG) is disordered. The span at 479 to 496 (QESESEADEVSEEDEEDQ) shows a compositional bias: acidic residues.

The protein belongs to the pescadillo family. In terms of assembly, component of the NOP7 complex, composed of ERB1, NOP7 and YTM1. The complex is held together by ERB1, which interacts with NOP7 via its N-terminal domain and with YTM1 via a high-affinity interaction between the seven-bladed beta-propeller domains of the 2 proteins. The NOP7 complex associates with the 66S pre-ribosome.

The protein resides in the nucleus. Its subcellular location is the nucleolus. It is found in the nucleoplasm. In terms of biological role, component of the NOP7 complex, which is required for maturation of the 25S and 5.8S ribosomal RNAs and formation of the 60S ribosome. The protein is Pescadillo homolog of Laccaria bicolor (strain S238N-H82 / ATCC MYA-4686) (Bicoloured deceiver).